Here is a 392-residue protein sequence, read N- to C-terminus: Na(+)/H(+) antiporter NhaA (392 aa).

The next 11 helical transmembrane spans lie at Ala14–Leu34, Leu59–Val79, Ile95–Phe115, Gly125–Gly145, Val154–Phe174, Val179–Trp199, Leu213–Val233, Gly254–Val274, Leu287–Phe307, Ile328–Leu348, and Leu363–Ala383.

This sequence belongs to the NhaA Na(+)/H(+) (TC 2.A.33) antiporter family.

Its subcellular location is the cell inner membrane. It carries out the reaction Na(+)(in) + 2 H(+)(out) = Na(+)(out) + 2 H(+)(in). In terms of biological role, na(+)/H(+) antiporter that extrudes sodium in exchange for external protons. This chain is Na(+)/H(+) antiporter NhaA, found in Yersinia enterocolitica serotype O:8 / biotype 1B (strain NCTC 13174 / 8081).